A 264-amino-acid chain; its full sequence is 3-deoxy-manno-octulosonate cytidylyltransferase (264 aa).

The protein belongs to the KdsB family.

The protein localises to the cytoplasm. The enzyme catalyses 3-deoxy-alpha-D-manno-oct-2-ulosonate + CTP = CMP-3-deoxy-beta-D-manno-octulosonate + diphosphate. It participates in nucleotide-sugar biosynthesis; CMP-3-deoxy-D-manno-octulosonate biosynthesis; CMP-3-deoxy-D-manno-octulosonate from 3-deoxy-D-manno-octulosonate and CTP: step 1/1. It functions in the pathway bacterial outer membrane biogenesis; lipopolysaccharide biosynthesis. Functionally, activates KDO (a required 8-carbon sugar) for incorporation into bacterial lipopolysaccharide in Gram-negative bacteria. In Methylibium petroleiphilum (strain ATCC BAA-1232 / LMG 22953 / PM1), this protein is 3-deoxy-manno-octulosonate cytidylyltransferase.